The primary structure comprises 346 residues: Uroporphyrinogen decarboxylase (346 aa).

Substrate is bound by residues 21-25, Asp71, Tyr146, Ser201, and His316; that span reads RQAGR.

It belongs to the uroporphyrinogen decarboxylase family. In terms of assembly, homodimer.

The protein resides in the cytoplasm. It catalyses the reaction uroporphyrinogen III + 4 H(+) = coproporphyrinogen III + 4 CO2. It functions in the pathway porphyrin-containing compound metabolism; protoporphyrin-IX biosynthesis; coproporphyrinogen-III from 5-aminolevulinate: step 4/4. In terms of biological role, catalyzes the decarboxylation of four acetate groups of uroporphyrinogen-III to yield coproporphyrinogen-III. This Rickettsia massiliae (strain Mtu5) protein is Uroporphyrinogen decarboxylase.